Consider the following 221-residue polypeptide: Tetraspanin-2 (221 aa).

Over 1–13 (MGRFRGGLRCIKY) the chain is Cytoplasmic. The helical transmembrane segment at 14–34 (LLLGFNLLFWLAGSAVIAFGL) threads the bilayer. Residues 35–54 (WFRFGGTIKDLSSEEKSPEY) are Extracellular-facing. The helical transmembrane segment at 55 to 75 (FYVGLYVLVGAGALMMAVGFF) threads the bilayer. Topologically, residues 76 to 90 (GCCGAMRESQCVLGS) are cytoplasmic. The chain crosses the membrane as a helical span at residues 91–111 (FFTCLLVIFAAEVTTGVFAFI). Topologically, residues 112–188 (GKDVAIRHVQ…ETIISVKLQL (77 aa)) are extracellular. An N-linked (GlcNAc...) asparagine glycan is attached at Asn-139. A helical transmembrane segment spans residues 189-209 (IGIVGIGIAGLTIFGMIFSMV). The Cytoplasmic segment spans residues 210–221 (LCCAIRNSRDVI).

Belongs to the tetraspanin (TM4SF) family. In terms of tissue distribution, expression is restricted to the nervous system.

The protein resides in the membrane. Its function is as follows. May play a role in signalling in oligodendrocytes in the early stages of their terminal differentiation into myelin-forming glia and may also function in stabilizing the mature sheath. The chain is Tetraspanin-2 (Tspan2) from Rattus norvegicus (Rat).